Consider the following 447-residue polypeptide: Glutamate-1-semialdehyde 2,1-aminomutase (447 aa).

N6-(pyridoxal phosphate)lysine is present on lysine 272.

This sequence belongs to the class-III pyridoxal-phosphate-dependent aminotransferase family. HemL subfamily. In terms of assembly, homodimer. Pyridoxal 5'-phosphate is required as a cofactor.

It localises to the cytoplasm. The catalysed reaction is (S)-4-amino-5-oxopentanoate = 5-aminolevulinate. The protein operates within porphyrin-containing compound metabolism; protoporphyrin-IX biosynthesis; 5-aminolevulinate from L-glutamyl-tRNA(Glu): step 2/2. The sequence is that of Glutamate-1-semialdehyde 2,1-aminomutase from Leifsonia xyli subsp. xyli (strain CTCB07).